We begin with the raw amino-acid sequence, 128 residues long: Ribosome-binding factor A (128 aa).

Belongs to the RbfA family. As to quaternary structure, monomer. Binds 30S ribosomal subunits, but not 50S ribosomal subunits or 70S ribosomes.

It localises to the cytoplasm. Its function is as follows. One of several proteins that assist in the late maturation steps of the functional core of the 30S ribosomal subunit. Associates with free 30S ribosomal subunits (but not with 30S subunits that are part of 70S ribosomes or polysomes). Required for efficient processing of 16S rRNA. May interact with the 5'-terminal helix region of 16S rRNA. This is Ribosome-binding factor A from Rippkaea orientalis (strain PCC 8801 / RF-1) (Cyanothece sp. (strain PCC 8801)).